A 506-amino-acid chain; its full sequence is Lysine--tRNA ligase (506 aa).

2 residues coordinate Mg(2+): Glu416 and Glu423.

Belongs to the class-II aminoacyl-tRNA synthetase family. As to quaternary structure, homodimer. It depends on Mg(2+) as a cofactor.

The protein localises to the cytoplasm. The catalysed reaction is tRNA(Lys) + L-lysine + ATP = L-lysyl-tRNA(Lys) + AMP + diphosphate. The polypeptide is Lysine--tRNA ligase (Xylella fastidiosa (strain M23)).